We begin with the raw amino-acid sequence, 200 residues long: Recombination protein RecR (200 aa).

The C4-type zinc finger occupies 58 to 73; it reads CSLCCNLTDEDPCSIC. The Toprim domain maps to 81 to 176; the sequence is NLLCVVEEPR…KVTRIAHGIP (96 aa).

The protein belongs to the RecR family.

Functionally, may play a role in DNA repair. It seems to be involved in an RecBC-independent recombinational process of DNA repair. It may act with RecF and RecO. This is Recombination protein RecR from Desulforamulus reducens (strain ATCC BAA-1160 / DSM 100696 / MI-1) (Desulfotomaculum reducens).